The sequence spans 468 residues: Kynureninase 2 (468 aa).

Pyridoxal 5'-phosphate is bound by residues Leu134, Thr135, 162–165, Asp247, His250, and Tyr272; that span reads FPSD. The residue at position 273 (Lys273) is an N6-(pyridoxal phosphate)lysine. 2 residues coordinate pyridoxal 5'-phosphate: Trp312 and Asn340.

Belongs to the kynureninase family. Homodimer. Pyridoxal 5'-phosphate is required as a cofactor.

It is found in the cytoplasm. The catalysed reaction is L-kynurenine + H2O = anthranilate + L-alanine + H(+). It catalyses the reaction 3-hydroxy-L-kynurenine + H2O = 3-hydroxyanthranilate + L-alanine + H(+). It functions in the pathway amino-acid degradation; L-kynurenine degradation; L-alanine and anthranilate from L-kynurenine: step 1/1. It participates in cofactor biosynthesis; NAD(+) biosynthesis; quinolinate from L-kynurenine: step 2/3. Catalyzes the cleavage of L-kynurenine (L-Kyn) and L-3-hydroxykynurenine (L-3OHKyn) into anthranilic acid (AA) and 3-hydroxyanthranilic acid (3-OHAA), respectively. In Aspergillus oryzae (strain ATCC 42149 / RIB 40) (Yellow koji mold), this protein is Kynureninase 2 (bna5-2).